Reading from the N-terminus, the 253-residue chain is uncharacterized protein (253 aa).

7 to 14 serves as a coordination point for ATP; it reads GKGGVGKT.

To M.jannaschii MJ0084 and MJ0823.

This is an uncharacterized protein from Methanocaldococcus jannaschii (strain ATCC 43067 / DSM 2661 / JAL-1 / JCM 10045 / NBRC 100440) (Methanococcus jannaschii).